A 227-amino-acid chain; its full sequence is Phosphoribosylformylglycinamidine synthase subunit PurQ (227 aa).

Residues 3–227 (FAVIVFPGSN…NWRESHVTAS (225 aa)) form the Glutamine amidotransferase type-1 domain. Cys86 acts as the Nucleophile in catalysis. Residues His194 and Glu196 contribute to the active site.

In terms of assembly, part of the FGAM synthase complex composed of 1 PurL, 1 PurQ and 2 PurS subunits.

It is found in the cytoplasm. It catalyses the reaction N(2)-formyl-N(1)-(5-phospho-beta-D-ribosyl)glycinamide + L-glutamine + ATP + H2O = 2-formamido-N(1)-(5-O-phospho-beta-D-ribosyl)acetamidine + L-glutamate + ADP + phosphate + H(+). The enzyme catalyses L-glutamine + H2O = L-glutamate + NH4(+). The protein operates within purine metabolism; IMP biosynthesis via de novo pathway; 5-amino-1-(5-phospho-D-ribosyl)imidazole from N(2)-formyl-N(1)-(5-phospho-D-ribosyl)glycinamide: step 1/2. Functionally, part of the phosphoribosylformylglycinamidine synthase complex involved in the purines biosynthetic pathway. Catalyzes the ATP-dependent conversion of formylglycinamide ribonucleotide (FGAR) and glutamine to yield formylglycinamidine ribonucleotide (FGAM) and glutamate. The FGAM synthase complex is composed of three subunits. PurQ produces an ammonia molecule by converting glutamine to glutamate. PurL transfers the ammonia molecule to FGAR to form FGAM in an ATP-dependent manner. PurS interacts with PurQ and PurL and is thought to assist in the transfer of the ammonia molecule from PurQ to PurL. This chain is Phosphoribosylformylglycinamidine synthase subunit PurQ, found in Shouchella clausii (strain KSM-K16) (Alkalihalobacillus clausii).